A 504-amino-acid polypeptide reads, in one-letter code: Arabinose import ATP-binding protein AraG (504 aa).

2 ABC transporter domains span residues 8-243 (LSFR…MVGR) and 256-499 (YGEE…MPKV). 40-47 (GENGAGKS) is a binding site for ATP.

It belongs to the ABC transporter superfamily. Arabinose importer (TC 3.A.1.2.2) family. As to quaternary structure, the complex is composed of two ATP-binding proteins (AraG), two transmembrane proteins (AraH) and a solute-binding protein (AraF).

It localises to the cell inner membrane. It catalyses the reaction L-arabinose(out) + ATP + H2O = L-arabinose(in) + ADP + phosphate + H(+). Functionally, part of the ABC transporter complex AraFGH involved in arabinose import. Responsible for energy coupling to the transport system. This Escherichia coli (strain UTI89 / UPEC) protein is Arabinose import ATP-binding protein AraG.